We begin with the raw amino-acid sequence, 340 residues long: Protein AC11 (340 aa).

Functionally, plays an essential role in nucleocapsid egress from the host nucleus to form the budded virion (BV). Does not participate in nucleocapsid formation. This is Protein AC11 from Autographa californica nuclear polyhedrosis virus (AcMNPV).